Consider the following 123-residue polypeptide: ATP synthase epsilon chain (123 aa).

This sequence belongs to the ATPase epsilon chain family. As to quaternary structure, F-type ATPases have 2 components, CF(1) - the catalytic core - and CF(0) - the membrane proton channel. CF(1) has five subunits: alpha(3), beta(3), gamma(1), delta(1), epsilon(1). CF(0) has three main subunits: a, b and c.

It is found in the cell membrane. Produces ATP from ADP in the presence of a proton gradient across the membrane. The protein is ATP synthase epsilon chain of Corynebacterium diphtheriae (strain ATCC 700971 / NCTC 13129 / Biotype gravis).